The sequence spans 219 residues: Small ribosomal subunit protein uS3c (219 aa).

In terms of domain architecture, KH type-2 spans 47–119; it reads VRKYVRTAEN…KFIISLAEVE (73 aa).

It belongs to the universal ribosomal protein uS3 family. In terms of assembly, part of the 30S ribosomal subunit.

The protein localises to the plastid. It is found in the chloroplast. The chain is Small ribosomal subunit protein uS3c (rps3) from Staurastrum punctulatum (Green alga).